The chain runs to 196 residues: UPF0319 protein VV1_0237 (196 aa).

Positions 1–19 (MKKMMILSALALFSSSLFA) are cleaved as a signal peptide.

It belongs to the UPF0319 family.

This chain is UPF0319 protein VV1_0237, found in Vibrio vulnificus (strain CMCP6).